A 261-amino-acid chain; its full sequence is 5'-nucleotidase SurE (261 aa).

Asp-8, Asp-9, Ser-43, and Asn-96 together coordinate a divalent metal cation.

It belongs to the SurE nucleotidase family. The cofactor is a divalent metal cation.

It localises to the cytoplasm. The catalysed reaction is a ribonucleoside 5'-phosphate + H2O = a ribonucleoside + phosphate. Nucleotidase that shows phosphatase activity on nucleoside 5'-monophosphates. The polypeptide is 5'-nucleotidase SurE (Cereibacter sphaeroides (strain ATCC 17025 / ATH 2.4.3) (Rhodobacter sphaeroides)).